A 423-amino-acid polypeptide reads, in one-letter code: L-cysteine:1D-myo-inositol 2-amino-2-deoxy-alpha-D-glucopyranoside ligase (423 aa).

Cysteine 43 is a binding site for Zn(2+). L-cysteinyl-5'-AMP is bound by residues cysteine 43 to threonine 46, threonine 58, and asparagine 81 to threonine 83. Positions isoleucine 45 to histidine 55 match the 'HIGH' region motif. The 'ERGGDP' region motif lies at glutamate 199–proline 204. Tryptophan 240 provides a ligand contact to L-cysteinyl-5'-AMP. Cysteine 244 is a binding site for Zn(2+). Glycine 262–aspartate 264 is a binding site for L-cysteinyl-5'-AMP. Zn(2+) is bound at residue histidine 269. Valine 295 is a binding site for L-cysteinyl-5'-AMP. Residues lysine 301 to serine 305 carry the 'KMSKS' region motif.

Belongs to the class-I aminoacyl-tRNA synthetase family. MshC subfamily. As to quaternary structure, monomer. It depends on Zn(2+) as a cofactor.

It carries out the reaction 1D-myo-inositol 2-amino-2-deoxy-alpha-D-glucopyranoside + L-cysteine + ATP = 1D-myo-inositol 2-(L-cysteinylamino)-2-deoxy-alpha-D-glucopyranoside + AMP + diphosphate + H(+). In terms of biological role, catalyzes the ATP-dependent condensation of GlcN-Ins and L-cysteine to form L-Cys-GlcN-Ins. The protein is L-cysteine:1D-myo-inositol 2-amino-2-deoxy-alpha-D-glucopyranoside ligase of Renibacterium salmoninarum (strain ATCC 33209 / DSM 20767 / JCM 11484 / NBRC 15589 / NCIMB 2235).